Here is an 892-residue protein sequence, read N- to C-terminus: Protein translocase subunit SecA (892 aa).

ATP-binding positions include Q89, 107-111 (GEGKT), and D517. Zn(2+) contacts are provided by C879, C881, C890, and H891.

The protein belongs to the SecA family. As to quaternary structure, monomer and homodimer. Part of the essential Sec protein translocation apparatus which comprises SecA, SecYEG and auxiliary proteins SecDF-YajC and YidC. Requires Zn(2+) as cofactor.

It is found in the cell inner membrane. The protein resides in the cytoplasm. The catalysed reaction is ATP + H2O + cellular proteinSide 1 = ADP + phosphate + cellular proteinSide 2.. Functionally, part of the Sec protein translocase complex. Interacts with the SecYEG preprotein conducting channel. Has a central role in coupling the hydrolysis of ATP to the transfer of proteins into and across the cell membrane, serving as an ATP-driven molecular motor driving the stepwise translocation of polypeptide chains across the membrane. The protein is Protein translocase subunit SecA of Ruthia magnifica subsp. Calyptogena magnifica.